A 270-amino-acid polypeptide reads, in one-letter code: Beta carbonic anhydrase 1 (270 aa).

Residues Cys-39, Asp-41, His-105, and Cys-108 each coordinate Zn(2+).

This sequence belongs to the beta-class carbonic anhydrase family. In terms of assembly, oligomer. Requires Zn(2+) as cofactor.

It catalyses the reaction hydrogencarbonate + H(+) = CO2 + H2O. Its function is as follows. Reversible hydration of carbon dioxide. The polypeptide is Beta carbonic anhydrase 1 (bca-1) (Caenorhabditis elegans).